The following is a 147-amino-acid chain: Bis(5'-nucleosyl)-tetraphosphatase [asymmetrical] (147 aa).

A2 is subject to N-acetylalanine. Residues 2-139 (ALRACGLIIF…EMKATLQEGH (138 aa)) enclose the Nudix hydrolase domain. Positions 43-64 (GHVDPGENDLETALRETREETG) match the Nudix box motif.

The protein belongs to the Nudix hydrolase family. A divalent metal cation is required as a cofactor.

It catalyses the reaction P(1),P(4)-bis(5'-guanosyl) tetraphosphate + H2O = GMP + GTP + 2 H(+). The catalysed reaction is a 5'-end CoA-ribonucleoside in mRNA + H2O = a 5'-end phospho-adenosine-phospho-ribonucleoside in mRNA + (R)-4'-phosphopantetheine + 2 H(+). The enzyme catalyses a 5'-end FAD-phospho-ribonucleoside in mRNA + H2O = a 5'-end phospho-adenosine-phospho-ribonucleoside in mRNA + FMN + 2 H(+). In terms of biological role, catalyzes the asymmetric hydrolysis of diadenosine 5',5'''-P1,P4-tetraphosphate (Ap4A) to yield AMP and ATP. Exhibits decapping activity towards FAD-capped RNAs and dpCoA-capped RNAs in vitro. This chain is Bis(5'-nucleosyl)-tetraphosphatase [asymmetrical] (Nudt2), found in Mus musculus (Mouse).